The primary structure comprises 148 residues: D-aminoacyl-tRNA deacylase (148 aa).

Residues 137–138 (GP) carry the Gly-cisPro motif, important for rejection of L-amino acids motif.

This sequence belongs to the DTD family. In terms of assembly, homodimer.

The protein resides in the cytoplasm. It carries out the reaction glycyl-tRNA(Ala) + H2O = tRNA(Ala) + glycine + H(+). The enzyme catalyses a D-aminoacyl-tRNA + H2O = a tRNA + a D-alpha-amino acid + H(+). In terms of biological role, an aminoacyl-tRNA editing enzyme that deacylates mischarged D-aminoacyl-tRNAs. Also deacylates mischarged glycyl-tRNA(Ala), protecting cells against glycine mischarging by AlaRS. Acts via tRNA-based rather than protein-based catalysis; rejects L-amino acids rather than detecting D-amino acids in the active site. By recycling D-aminoacyl-tRNA to D-amino acids and free tRNA molecules, this enzyme counteracts the toxicity associated with the formation of D-aminoacyl-tRNA entities in vivo and helps enforce protein L-homochirality. This is D-aminoacyl-tRNA deacylase from Deinococcus geothermalis (strain DSM 11300 / CIP 105573 / AG-3a).